A 316-amino-acid polypeptide reads, in one-letter code: Acetaldehyde dehydrogenase 1 (316 aa).

NAD(+) is bound at residue 12–15; sequence SGNI. Catalysis depends on cysteine 132, which acts as the Acyl-thioester intermediate. Residues 163–171 and asparagine 291 contribute to the NAD(+) site; that span reads SAGPGTRAN.

It belongs to the acetaldehyde dehydrogenase family.

It catalyses the reaction acetaldehyde + NAD(+) + CoA = acetyl-CoA + NADH + H(+). This Pseudomonas putida (strain ATCC 700007 / DSM 6899 / JCM 31910 / BCRC 17059 / LMG 24140 / F1) protein is Acetaldehyde dehydrogenase 1.